The primary structure comprises 401 residues: Glucose-6-phosphate isomerase (401 aa).

The Proton donor role is filled by glutamate 261. Residues histidine 282 and lysine 392 contribute to the active site.

The protein belongs to the GPI family. Homodimer.

The protein resides in the cytoplasm. It carries out the reaction alpha-D-glucose 6-phosphate = beta-D-fructose 6-phosphate. The protein operates within carbohydrate biosynthesis; gluconeogenesis. It participates in carbohydrate degradation; glycolysis; D-glyceraldehyde 3-phosphate and glycerone phosphate from D-glucose: step 2/4. Its activity is regulated as follows. Competively inhibited by 6-phosphogluconate and erythrose 4-phosphate. Catalyzes the isomerization of glucose-6-P to fructose-6-P. The protein is Glucose-6-phosphate isomerase of Methanocaldococcus jannaschii (strain ATCC 43067 / DSM 2661 / JAL-1 / JCM 10045 / NBRC 100440) (Methanococcus jannaschii).